A 518-amino-acid chain; its full sequence is T-box transcription factor TBX5 (518 aa).

Residues 1–46 (MADTDEGFGLARTPLEPDSKDRSCDSKPESALGAPSKSPSSPQAAF) form a disordered region. Residues 15-28 (LEPDSKDRSCDSKP) show a composition bias toward basic and acidic residues. A compositionally biased stretch (low complexity) spans 34-45 (APSKSPSSPQAA). The segment at residues 58 to 238 (LHERELWLKF…NNPFAKGFRG (181 aa)) is a DNA-binding region (T-box). 2 disordered regions span residues 254–307 (EYPV…LLPP) and 330–352 (ECSSTEHPYKKPYMETSPSEEDT). Positions 269–301 (SNHSPFSSETRALSTSSNLGSQYQCENGVSGPS) are enriched in polar residues. K339 carries the N6-acetyllysine modification.

Monomer. Homodimer (via the T-box); binds DNA as homodimer. Interacts (via the T-box) with NKX2-5 (via the homeobox); this complex binds DNA. Interacts with GATA4. Interacts with KAT2A and KAT2B. Post-translationally, acetylation at Lys-339 by KAT2A and KAT2B promotes nuclear retention.

It is found in the nucleus. It localises to the cytoplasm. DNA-binding protein that regulates the transcription of several genes and is involved in heart development and limb pattern formation. Binds to the core DNA motif of NPPA promoter. This is T-box transcription factor TBX5 (Tbx5) from Mus musculus (Mouse).